Here is a 410-residue protein sequence, read N- to C-terminus: Tegument protein VP16 homolog (410 aa).

The disordered stretch occupies residues 388-410 (PPSPSEILPGDPPRPPTCGFLTR).

The protein belongs to the herpesviridae tegument protein VP16 protein family. As to quaternary structure, associates with the VP16-induced complex; binding to host HCFC1 activates VP16 for association with the octamer motif-binding host protein POU2F1, to form a multiprotein-DNA complex responsible for activating transcription of the viral immediate early genes.

The protein resides in the virion tegument. The protein localises to the host nucleus. Transcriptional activator of immediate-early (IE) gene products (alpha genes). Acts as a key activator of lytic infection by initiating the lytic program through the assembly of the transcriptional regulatory VP16-induced complex composed of VP16 and two cellular factors, HCFC1 and POU2F 1. VP16-induced complex represents a regulatory switch: when it is on, it promotes IE-gene expression and thus lytic infection, and when it is off, it limits IE-gene transcription favoring latent infection. Its function is as follows. May play a role in the aggregation of tegument proteins around nucleocapsids during virus morphogenesis. This chain is Tegument protein VP16 homolog, found in Varicella-zoster virus (strain Oka vaccine) (HHV-3).